Reading from the N-terminus, the 304-residue chain is MESWARCIFLLLLQILTGGRGDILHSGAGKIVGGQDAPEGRWPWQVSLRTEKEGHICGGSLIHEVWVLTAAHCFRRPLNSSFYHVKVGGLTLSLTEPHSTLVAVRNIFVYPTYLWEDASSGDIALLRLDTPLQPSQFSPVCLPQAQAPLTPGTVCWVTGWGATHERELASVLQELAVPLLDSEDCERMYHIGETSLSGKRVIQSDMLCAGFVEGQKDSCQGDSGGPLVCAINSSWIQVGITSWGIGCARPNKPGVYTRVPDYVDWIQRTLAENHSDAYGCRSRASGAYPALLLVLLAFALPESL.

The signal sequence occupies residues 1–21; the sequence is MESWARCIFLLLLQILTGGRG. Positions 22 to 30 are cleaved as a propeptide — activation peptide; the sequence is DILHSGAGK. A Peptidase S1 domain is found at 31-271; it reads IVGGQDAPEG…YVDWIQRTLA (241 aa). The cysteines at positions 57 and 73 are disulfide-linked. Histidine 72 acts as the Charge relay system in catalysis. An N-linked (GlcNAc...) asparagine glycan is attached at asparagine 79. Aspartate 122 acts as the Charge relay system in catalysis. Intrachain disulfides connect cysteine 155/cysteine 229, cysteine 185/cysteine 208, and cysteine 219/cysteine 247. Serine 223 (charge relay system) is an active-site residue. 2 N-linked (GlcNAc...) asparagine glycosylation sites follow: asparagine 232 and asparagine 273. The GPI-anchor amidated serine moiety is linked to residue serine 275. Positions 276–304 are cleaved as a propeptide — removed in mature form; sequence DAYGCRSRASGAYPALLLVLLAFALPESL.

This sequence belongs to the peptidase S1 family. Expressed predominantly in kidney, small intestine and stomach and moderately in thymus, lung, spleen, testis and skin. In the kidney, expressed mainly in collecting duct of renal medulla and cortex.

The protein localises to the cell membrane. With respect to regulation, inhibited by aprotinin, leupeptin, benzamidine and soybean trypsin inhibitor. Partially inhibited by PMSF and DFP. In terms of biological role, selectively cleaves synthetic peptide substrates of trypsin. Activates the epithelial sodium channel ENaC. This Rattus norvegicus (Rat) protein is Serine protease 30 (Prss30).